The following is a 346-amino-acid chain: LRP2-binding protein (346 aa).

Residues 58-91 form a TPR repeat; the sequence is AMAYFLRGQLYFEEGWYEEALAQFEEIQEKDHQA. Sel1-like repeat units lie at residues 92-124, 132-167, 172-205, 206-241, 242-276, and 296-331; these read IYQLGVMYYDGLGTIANAEKGVNYMRKILDSSC, FAAAYNLGRAYFEGKGVKRSDEEAERLWLLAADNGN, VKAQSILGLFYSMKEPKELEKAFFWHSEACGNGS, LESQGALGLMYFYGQGIRQDTDAALHCLREAAERGN, VYAQGTLVEYYYKMKFFTKCVSFSKRIADYDEVHD, and AMAAFYHGRCLQLGLGIMKDEESAKHYYSKACRLNP.

As to quaternary structure, interacts with LRP2.

It localises to the cytoplasm. Its function is as follows. May act as an adapter that regulates LRP2 function. This chain is LRP2-binding protein (Lrp2bp), found in Mus musculus (Mouse).